We begin with the raw amino-acid sequence, 217 residues long: UPF0502 protein VFMJ11_A0613 (217 aa).

This sequence belongs to the UPF0502 family.

The chain is UPF0502 protein VFMJ11_A0613 from Aliivibrio fischeri (strain MJ11) (Vibrio fischeri).